Here is a 557-residue protein sequence, read N- to C-terminus: Polypyrimidine tract-binding protein 1 (557 aa).

Position 1 is an N-acetylmethionine (Met-1). Position 16 is a phosphoserine (Ser-16). RRM domains lie at 59-143, 184-260, and 363-437; these read RVIH…SSPN, LRII…FSKL, and SVLL…LSKH. Lys-65 is covalently cross-linked (Glycyl lysine isopeptide (Lys-Gly) (interchain with G-Cter in SUMO2)). A Phosphotyrosine modification is found at Tyr-127. Thr-138 is subject to Phosphothreonine. A Phosphoserine modification is found at Ser-141. Lys-218 participates in a covalent cross-link: Glycyl lysine isopeptide (Lys-Gly) (interchain with G-Cter in SUMO2). Ser-459 is subject to Phosphoserine. Residues 480–555 enclose the RRM 4 domain; that stretch reads ATLHLSNIPP…HHLRVSFSKS (76 aa).

In terms of assembly, monomer. Part of a ternary complex containing KHSRP, PTBP1, PTBP2 and HNRPH1. Interacts with RAVER1 and SFPQ.

The protein localises to the nucleus. In terms of biological role, plays a role in pre-mRNA splicing and in the regulation of alternative splicing events. Activates exon skipping of its own pre-mRNA during muscle cell differentiation. Binds to the polypyrimidine tract of introns. May promote RNA looping when bound to two separate polypyrimidine tracts in the same pre-mRNA. May promote the binding of U2 snRNP to pre-mRNA. Cooperates with RAVER1 to modulate switching between mutually exclusive exons during maturation of the TPM1 pre-mRNA. Represses the splicing of MAPT/Tau exon 10. Binds to polypyrimidine-rich controlling element (PCE) of CFTR and promotes exon skipping of CFTR exon 9, thereby antagonizing TIA1 and its role in exon inclusion of CFTR exon 9. Plays a role in the splicing of pyruvate kinase PKM by binding repressively to a polypyrimidine tract flanking PKM exon 9, inhibiting exon 9 inclusion and resulting in exon 10 inclusion and production of the PKM M2 isoform. The chain is Polypyrimidine tract-binding protein 1 (PTBP1) from Sus scrofa (Pig).